The chain runs to 226 residues: Deoxyribose-phosphate aldolase (226 aa).

Asp-94 functions as the Proton donor/acceptor in the catalytic mechanism. The active-site Schiff-base intermediate with acetaldehyde is Lys-156. Lys-185 serves as the catalytic Proton donor/acceptor.

It belongs to the DeoC/FbaB aldolase family. DeoC type 1 subfamily.

Its subcellular location is the cytoplasm. The catalysed reaction is 2-deoxy-D-ribose 5-phosphate = D-glyceraldehyde 3-phosphate + acetaldehyde. The protein operates within carbohydrate degradation; 2-deoxy-D-ribose 1-phosphate degradation; D-glyceraldehyde 3-phosphate and acetaldehyde from 2-deoxy-alpha-D-ribose 1-phosphate: step 2/2. In terms of biological role, catalyzes a reversible aldol reaction between acetaldehyde and D-glyceraldehyde 3-phosphate to generate 2-deoxy-D-ribose 5-phosphate. This chain is Deoxyribose-phosphate aldolase, found in Burkholderia orbicola (strain MC0-3).